Reading from the N-terminus, the 161-residue chain is Cyclic pyranopterin monophosphate synthase (161 aa).

Residues 78 to 80 and 116 to 117 each bind substrate; these read LCH and ME. The active site involves Asp131.

Belongs to the MoaC family. In terms of assembly, homohexamer; trimer of dimers.

The catalysed reaction is (8S)-3',8-cyclo-7,8-dihydroguanosine 5'-triphosphate = cyclic pyranopterin phosphate + diphosphate. It functions in the pathway cofactor biosynthesis; molybdopterin biosynthesis. Its function is as follows. Catalyzes the conversion of (8S)-3',8-cyclo-7,8-dihydroguanosine 5'-triphosphate to cyclic pyranopterin monophosphate (cPMP). The polypeptide is Cyclic pyranopterin monophosphate synthase (Bordetella parapertussis (strain 12822 / ATCC BAA-587 / NCTC 13253)).